Reading from the N-terminus, the 1233-residue chain is Insulin receptor substrate 1 (1233 aa).

Serine 3 is subject to Phosphoserine. The tract at residues 3 to 133 (SPPDTDGFSD…AGGGCGGSCS (131 aa)) is mediates interaction with PHIP. The PH domain occupies 12 to 115 (DVRKVGYLRK…WYQALLQLHN (104 aa)). Serine 99 bears the Phosphoserine; by CK2 mark. An IRS-type PTB domain is found at 155–259 (FKEVWQVILK…EAMRAMSDEF (105 aa)). Residues 257-425 (DEFRPRSKSQ…SDGGFISSDE (169 aa)) form a disordered region. The span at 264–276 (KSQSSSSCSNPIS) shows a compositional bias: low complexity. Phosphoserine; by RPS6KB1 is present on residues serine 265 and serine 302. Serine 307 is subject to Phosphoserine; by IKKB, MAPK8 and RPS6KB1. A phosphoserine mark is found at serine 318, serine 325, serine 340, and serine 343. The span at 349 to 358 (THAHRHRGSS) shows a compositional bias: basic residues. 2 stretches are compositionally biased toward low complexity: residues 378 to 399 (SPSATSPVSLSSSSTSGHGSTS) and 407 to 419 (SSASVSGSPSDGG). Serine 414 bears the Phosphoserine mark. A phosphothreonine mark is found at threonine 441 and threonine 448. Tyrosine 460 carries the phosphotyrosine; by INSR modification. The short motif at 460–463 (YICM) is the YXXM motif 1 element. Phosphoserine; by RPS6KB1 is present on serine 522. Short sequence motifs (YXXM motif) lie at residues 546 to 549 (YTEM) and 608 to 611 (YMPM). Tyrosine 608 carries the post-translational modification Phosphotyrosine; by INSR. A Phosphoserine modification is found at serine 612. Tyrosine 628 carries the post-translational modification Phosphotyrosine; by INSR. The YXXM motif 4 signature appears at 628-631 (YMPM). Serine 632 is subject to Phosphoserine; by RPS6KB1 and ROCK2. Residues 651–720 (QRVDPNGYMM…PPVESGGGKL (70 aa)) form a disordered region. Tyrosine 658 carries the post-translational modification Phosphotyrosine. The YXXM motif 5 motif lies at 658–661 (YMMM). Residues 662–689 (SPSGSCSPDIGGGSSSSSSISAAPSGSS) show a composition bias toward low complexity. The YXXM motif 6 motif lies at 727-730 (YMNM). The tract at residues 766–985 (FKHTQRPGEP…VPNSRGDYMT (220 aa)) is disordered. The span at 771-780 (RPGEPEEGAR) shows a compositional bias: basic and acidic residues. Composition is skewed to low complexity over residues 785–794 (RLSSSSGRLR) and 801–810 (DSSSSTSSDS). Serine 789 carries the post-translational modification Phosphoserine; by AMPK and SIK2. Position 887 is a phosphoserine (serine 887). Phosphotyrosine; by INSR is present on residues tyrosine 891, tyrosine 935, and tyrosine 983. The tract at residues 891–893 (YVN) is GRB2-binding. Short sequence motifs (YXXM motif) lie at residues 935-938 (YMNM), 983-986 (YMTM), and 1006-1009 (YADM). Residues 1015 to 1137 (AEKASLPRPT…GSEDVKRHSS (123 aa)) are disordered. The span at 1032–1042 (STASSSASVTP) shows a compositional bias: low complexity. Polar residues-rich tracts occupy residues 1043 to 1052 (QGATAEQATH) and 1069 to 1081 (TRVNLSPNHNQSA). Residues serine 1096 and serine 1097 each carry the phosphoserine modification. Over residues 1116–1129 (AAVGGSGGGGGGGS) the composition is skewed to gly residues. Tyrosine 1173 is modified (phosphotyrosine; by INSR). Positions 1178–1233 (LAKEHSQDCPSQQQSLPPPPPHQPLGSNEGNSPRRSSEDLSNYASISFQKQPEDRQ) are disordered. A Glycyl lysine isopeptide (Lys-Gly) (interchain with G-Cter in ubiquitin) cross-link involves residue lysine 1180. Residues 1203–1227 (GSNEGNSPRRSSEDLSNYASISFQK) show a composition bias toward polar residues. Residue tyrosine 1220 is modified to Phosphotyrosine; by INSR.

Interacts (via phosphorylated YXXM motifs) with PIK3R1. Interacts with ROCK1. Interacts with GRB2. Interacts with SOCS7. Interacts (via IRS-type PTB domain) with IGF1R and INSR (via the tyrosine-phosphorylated NPXY motif). Interacts with UBTF and PIK3CA. Interacts (via PH domain) with PHIP. Interacts with FER. Interacts with ALK. Interacts with EIF2AK2/PKR. Interacts with GKAP1. Interacts with DGKZ in the absence of insulin; insulin stimulation decreases this interaction. Found in a ternary complex with DGKZ and PIP5K1A in the absence of insulin stimulation. Interacts with SQSTM1; the interaction is disrupted by the presence of tensin TNS2. Interacts with NCK1 (via SH2 domain). Interacts with NCK2 (via SH3 domain). Interacts with SH2B1; this interaction enhances leptin-induced activation of the PI3-kinase pathway. Interacts with DVL2; this interaction promotes the Wnt/beta-catenin signaling pathway. Serine phosphorylation of IRS1 is a mechanism for insulin resistance. Ser-307 phosphorylation inhibits insulin action through disruption of IRS1 interaction with the insulin receptor. Phosphorylation of Tyr-891 is required for GRB2-binding. Phosphorylated by ALK. Phosphorylated at Ser-265, Ser-302, Ser-632 and Ser-1097 by RPS6KB1; phosphorylation induces accelerated degradation of IRS1. Phosphorylated on tyrosine residues in response to insulin. In skeletal muscles, dephosphorylated on Tyr-608 by TNS2 under anabolic conditions; dephosphorylation results in the proteasomal degradation of IRS1. Post-translationally, ubiquitinated by the Cul7-RING(FBXW8) complex in a mTOR-dependent manner, leading to its degradation: the Cul7-RING(FBXW8) complex recognizes and binds IRS1 previously phosphorylated by S6 kinase (RPS6KB1 or RPS6KB2). Ubiquitinated by TRAF4 through 'Lys-29' linkage; this ubiquitination regulates the interaction of IRS1 with IGFR and IRS1 tyrosine phosphorylation upon IGF1 stimulation. In terms of processing, S-nitrosylation at by BLVRB inhibits its activity. In terms of tissue distribution, expressed in osteoblasts, but not in osteoclasts.

It is found in the cytoplasm. It localises to the nucleus. In terms of biological role, signaling adapter protein that participates in the signal transduction from two prominent receptor tyrosine kinases, insulin receptor/INSR and insulin-like growth factor I receptor/IGF1R. Plays therefore an important role in development, growth, glucose homeostasis as well as lipid metabolism. Upon phosphorylation by the insulin receptor, functions as a signaling scaffold that propagates insulin action through binding to SH2 domain-containing proteins including the p85 regulatory subunit of PI3K, NCK1, NCK2, GRB2 or SHP2. Recruitment of GRB2 leads to the activation of the guanine nucleotide exchange factor SOS1 which in turn triggers the Ras/Raf/MEK/MAPK signaling cascade. Activation of the PI3K/AKT pathway is responsible for most of insulin metabolic effects in the cell, and the Ras/Raf/MEK/MAPK is involved in the regulation of gene expression and in cooperation with the PI3K pathway regulates cell growth and differentiation. Acts a positive regulator of the Wnt/beta-catenin signaling pathway through suppression of DVL2 autophagy-mediated degradation leading to cell proliferation. The polypeptide is Insulin receptor substrate 1 (Irs1) (Mus musculus (Mouse)).